A 145-amino-acid chain; its full sequence is Ribonuclease VapC48 (145 aa).

The Mg(2+) site is built by D6 and D109. One can recognise a PINc domain in the interval 15–141; the sequence is HRASPFHDKA…RKFEGIRIRD (127 aa).

Belongs to the PINc/VapC protein family. Mg(2+) is required as a cofactor.

Its function is as follows. Toxic component of a type II toxin-antitoxin (TA) system. An RNase. Its cognate antitoxin is VapB48. This chain is Ribonuclease VapC48, found in Mycobacterium tuberculosis (strain CDC 1551 / Oshkosh).